The sequence spans 786 residues: Probable glutamine--tRNA ligase (786 aa).

The span at 181 to 198 (DLAPKKKEKKPEGPKPSK) shows a compositional bias: basic and acidic residues. Positions 181 to 218 (DLAPKKKEKKPEGPKPSKDAAAAATAPGTKNQKEASPE) are disordered. The 'HIGH' region motif lies at 276-286 (PEPNGVLHIGH). Residues 277 to 279 (EPN) and 283 to 289 (HIGHAKA) each bind ATP. Residues D309 and Y444 each coordinate L-glutamine. ATP is bound by residues T463, 492-493 (RL), and 500-502 (VSK). The short motif at 499–503 (VVSKR) is the 'KMSKS' region element.

Belongs to the class-I aminoacyl-tRNA synthetase family.

The enzyme catalyses tRNA(Gln) + L-glutamine + ATP = L-glutaminyl-tRNA(Gln) + AMP + diphosphate. The protein is Probable glutamine--tRNA ligase of Caenorhabditis elegans.